A 212-amino-acid chain; its full sequence is Thymidylate kinase (212 aa).

11–18 contacts ATP; it reads GPEGAGKT.

The protein belongs to the thymidylate kinase family.

The enzyme catalyses dTMP + ATP = dTDP + ADP. Functionally, phosphorylation of dTMP to form dTDP in both de novo and salvage pathways of dTTP synthesis. The chain is Thymidylate kinase from Streptococcus pneumoniae (strain Taiwan19F-14).